The chain runs to 189 residues: Glycerol-3-phosphate acyltransferase (189 aa).

A run of 5 helical transmembrane segments spans residues 1 to 21 (MFWL…AIVL), 50 to 70 (KLAI…VLLA), 77 to 97 (LHAQ…PLYF), 111 to 131 (MLMA…LLTF), and 151 to 171 (LLAW…VMIV).

The protein belongs to the PlsY family. Probably interacts with PlsX.

It localises to the cell inner membrane. It carries out the reaction an acyl phosphate + sn-glycerol 3-phosphate = a 1-acyl-sn-glycero-3-phosphate + phosphate. It participates in lipid metabolism; phospholipid metabolism. Its function is as follows. Catalyzes the transfer of an acyl group from acyl-phosphate (acyl-PO(4)) to glycerol-3-phosphate (G3P) to form lysophosphatidic acid (LPA). This enzyme utilizes acyl-phosphate as fatty acyl donor, but not acyl-CoA or acyl-ACP. This is Glycerol-3-phosphate acyltransferase from Pseudomonas putida (strain ATCC 47054 / DSM 6125 / CFBP 8728 / NCIMB 11950 / KT2440).